The primary structure comprises 467 residues: ATP synthase subunit beta (467 aa).

Position 150–157 (150–157 (GGAGVGKT)) interacts with ATP.

The protein belongs to the ATPase alpha/beta chains family. F-type ATPases have 2 components, CF(1) - the catalytic core - and CF(0) - the membrane proton channel. CF(1) has five subunits: alpha(3), beta(3), gamma(1), delta(1), epsilon(1). CF(0) has three main subunits: a(1), b(2) and c(9-12). The alpha and beta chains form an alternating ring which encloses part of the gamma chain. CF(1) is attached to CF(0) by a central stalk formed by the gamma and epsilon chains, while a peripheral stalk is formed by the delta and b chains.

It localises to the cell inner membrane. It carries out the reaction ATP + H2O + 4 H(+)(in) = ADP + phosphate + 5 H(+)(out). Functionally, produces ATP from ADP in the presence of a proton gradient across the membrane. The catalytic sites are hosted primarily by the beta subunits. This is ATP synthase subunit beta from Aliivibrio salmonicida (strain LFI1238) (Vibrio salmonicida (strain LFI1238)).